The chain runs to 1250 residues: MHPDLGPLWTLLYVLVILCSSVSSDLAPYFISEPLSAVQKLGRPVVLHCSAKPVTARISWLHNGKRLDRNTEQIKIHRGTLTILSLNPSLSGCYQCVANNSVGAVVSGPATVSAAALGDFDSSTMHVITAEEKNTGFIGCRVPESNPKAEVRYKIRGKWLKHSTGNYIILPSGNLQVLNVSSKDKGSYKCAAYNPVTSELKVEPTGRKLLVSRPSSNGFHILHPALSQALAVLPHSPVTLECVVSGVPASQVYWLKDGQDAVAGSNWRRLYSHLATASIDPADSGNYSCVVGNKSGDVKHVTYMVNVLEHASISKGLHDQKVSLGATVHFTCDVHGNPAPNRTWFHNAQPIHPSSRHLTEGNVLKITRVVMEDSGLYQCVADNGIGFMQSTGRLQIEQDSGWKPVIVTAPANIEVMDGDFVTLSCNATGVPVPVIHWYGRHGLITSHPSQVLRSKPRKSHLFRPGDLDLEPVYLIMSQAGSSSLSIQAVTLEHAGKYTCEATNKHGSTQSEAFLTVVPFETNTKAESVTPSEASQNDERDPQDGSESSLLNLFPVKVHPSGVELPAERNASVPDAPNILSPPQTHMPDTYNLVWRAGRDGGMPINAYFVKYRKLDDGSGAVGSWHTVRVPGSENELHLTELEPSSLYEVLMVARSAVGEGQPAMLTFRTSKEKMASSKNTQASFPPVGVPKRPVTAEASNSNFGVVLTDSSRHSGVPEAPDRPTISMASETSVYVTWIPRANGGSPITAFKVEYKRMRTSDWLVAAEDIPPSKLSVEVRSLEPGSIYKFRVIAINHYGESFRSSASRPYQVAGFPNRFSNRPITGPHIAYTEAVSDTQIMLKWTYVPSSNNNTPIQGFYIYYRPTDSDNDSDYKRDVVEGSKQWHTIGHLQPETSYDIKMQCFNEGGESEFSNVMICETKVKRVPGASDYPVKELSTPPSSSGNAGNVGPATSPARSSDMLYLIVGCVLGVMVLILMVFIALCLWKSRQQSTIQKYDPPGYLYQGSEINGQMVEYTTLSGAARINGSVHGGFLSNGCSHLHHKGPSGVNGTLSGNINGGLYSAHTNSLTRACVEFEHPHHLVNSGGVYTAVPQMDPLECINCRNCRNNNRCFTKTNSPLPVVPVVASYPQGGLEMKPLNAMKVPVCPASTVPDHGQLPDDCVKDSVAPIPTQHTCCQDNISDINSDSTEDTAEFSRGDSSGHSEAEDKVFSWNPLILSPVLEDCGEKTARSPPGPPLDGLSVVLQQAQET.

Residues 1 to 24 form the signal peptide; the sequence is MHPDLGPLWTLLYVLVILCSSVSS. Residues 25-962 lie on the Extracellular side of the membrane; sequence DLAPYFISEP…SPARSSDMLY (938 aa). Ig-like C2-type domains lie at 28-113, 119-203, 224-302, 309-395, and 404-515; these read PYFI…ATVS, DFDS…LKVE, PALS…KHVT, EHAS…GRLQ, and PVIV…AFLT. The cysteines at positions 49 and 96 are disulfide-linked. N-linked (GlcNAc...) asparagine glycans are attached at residues Asn-99, Asn-179, Asn-286, Asn-293, Asn-341, and Asn-426. 2 disulfide bridges follow: Cys-140–Cys-190 and Cys-242–Cys-289. 2 disulfide bridges follow: Cys-332–Cys-379 and Cys-425–Cys-499. Positions 524–534 are enriched in polar residues; that stretch reads KAESVTPSEAS. The disordered stretch occupies residues 524–547; it reads KAESVTPSEASQNDERDPQDGSES. N-linked (GlcNAc...) asparagine glycosylation occurs at Asn-569. Fibronectin type-III domains lie at 572–673, 719–814, and 822–922; these read VPDA…SKEK, APDR…VAGF, and PITG…TKVK. Asn-869 is a glycosylation site (N-linked (GlcNAc...) asparagine). The tract at residues 929-951 is disordered; it reads DYPVKELSTPPSSSGNAGNVGPA. The helical transmembrane segment at 963–983 threads the bilayer; the sequence is LIVGCVLGVMVLILMVFIALC. Residues 984–1250 lie on the Cytoplasmic side of the membrane; it reads LWKSRQQSTI…SVVLQQAQET (267 aa). Disordered stretches follow at residues 1178–1208 and 1223–1250; these read DNIS…AEDK and DCGE…AQET. Residues 1193 to 1208 show a composition bias toward basic and acidic residues; sequence EFSRGDSSGHSEAEDK.

In terms of assembly, part of a complex that contains BOC, CDON, NEO1, cadherins and CTNNB1. Interacts with NTN3. Interacts with DHH, IHH and SHH. N-glycosylated. In terms of tissue distribution, highly expressed in somites and the dorsal lips of the neural tube during embryogenesis. Detected at very low levels in adult tissues.

The protein resides in the cell membrane. In terms of biological role, component of a cell-surface receptor complex that mediates cell-cell interactions between muscle precursor cells. Promotes differentiation of myogenic cells. Required for response to NTN3 and activation of NFATC3. This Mus musculus (Mouse) protein is Cell adhesion molecule-related/down-regulated by oncogenes (Cdon).